A 235-amino-acid polypeptide reads, in one-letter code: Protein Thf1 (235 aa).

Residues 183–204 (DKLNKDLELYRSNLDKMAQALV) are a coiled coil. Residues 213 to 235 (DRKKREQRKQQSTAPVAPPSSNE) form a disordered region. Residues 222–235 (QQSTAPVAPPSSNE) are compositionally biased toward polar residues.

The protein belongs to the THF1 family.

Its function is as follows. May be involved in photosynthetic membrane biogenesis. This chain is Protein Thf1, found in Nostoc punctiforme (strain ATCC 29133 / PCC 73102).